Reading from the N-terminus, the 238-residue chain is UDP-2,3-diacylglucosamine hydrolase (238 aa).

Residues Asp8, His10, Asp41, Asn78, and His113 each contribute to the Mn(2+) site. 78–79 (NR) serves as a coordination point for substrate. Substrate-binding residues include Asp121, Ser159, Asn163, Lys166, and His194. Residues His194 and His196 each contribute to the Mn(2+) site.

The protein belongs to the LpxH family. Requires Mn(2+) as cofactor.

It localises to the cell inner membrane. It carries out the reaction UDP-2-N,3-O-bis[(3R)-3-hydroxytetradecanoyl]-alpha-D-glucosamine + H2O = 2-N,3-O-bis[(3R)-3-hydroxytetradecanoyl]-alpha-D-glucosaminyl 1-phosphate + UMP + 2 H(+). It functions in the pathway glycolipid biosynthesis; lipid IV(A) biosynthesis; lipid IV(A) from (3R)-3-hydroxytetradecanoyl-[acyl-carrier-protein] and UDP-N-acetyl-alpha-D-glucosamine: step 4/6. In terms of biological role, hydrolyzes the pyrophosphate bond of UDP-2,3-diacylglucosamine to yield 2,3-diacylglucosamine 1-phosphate (lipid X) and UMP by catalyzing the attack of water at the alpha-P atom. Involved in the biosynthesis of lipid A, a phosphorylated glycolipid that anchors the lipopolysaccharide to the outer membrane of the cell. This Shewanella piezotolerans (strain WP3 / JCM 13877) protein is UDP-2,3-diacylglucosamine hydrolase.